We begin with the raw amino-acid sequence, 92 residues long: Arrestin-C (92 aa).

Belongs to the arrestin family. In terms of assembly, homodimer; disulfide-linked in response to retinal illumination. Interacts with CXCR4; the interaction is dependent on the C-terminal phosphorylation of CXCR4 and modulates the calcium ion mobilization activity of CXCR4. Interacts with GPR84. In terms of tissue distribution, retina and pineal gland.

The protein localises to the photoreceptor inner segment. Its subcellular location is the cell projection. The protein resides in the cilium. It is found in the photoreceptor outer segment. Functionally, may play a role in an as yet undefined retina-specific signal transduction. Could bind to photoactivated-phosphorylated red/green opsins. The sequence is that of Arrestin-C (Arr3) from Rattus norvegicus (Rat).